The sequence spans 353 residues: CCN family member 3 (353 aa).

Positions 1–26 are cleaved as a signal peptide; sequence MEPGGGHSLPVLLLLLLLLLLRPSEV. Positions 29 to 103 constitute an IGFBP N-terminal domain; sequence REAPCPRPCG…GGGTGICMVL (75 aa). Disulfide bonds link Cys33-Cys59, Cys37-Cys61, Cys41-Cys62, Cys48-Cys65, Cys73-Cys87, and Cys79-Cys100. A VWFC domain is found at 106 to 172; that stretch reads DNCVFDGMIY…GECCEKWVCE (67 aa). Residues 203-248 form the TSP type-1 domain; sequence NCIEQTTEWSACSRSCGMGFSTRVTNRNQQCEMVKQTRLCMMRPCE. 5 disulfide bridges follow: Cys260-Cys297, Cys277-Cys311, Cys288-Cys327, Cys291-Cys329, and Cys296-Cys333. Positions 260 to 334 constitute a CTCK domain; the sequence is CIRTKKSMKA…NTCVCHGNCP (75 aa). The N-linked (GlcNAc...) asparagine glycan is linked to Asn276.

Belongs to the CCN family.

The protein localises to the secreted. The protein resides in the cytoplasm. It localises to the cell junction. It is found in the gap junction. In terms of biological role, immediate-early protein likely to play a role in cell growth regulation. The polypeptide is CCN family member 3 (CCN3) (Coturnix japonica (Japanese quail)).